A 273-amino-acid chain; its full sequence is Tryptophan synthase alpha chain (273 aa).

Active-site proton acceptor residues include E49 and D60.

The protein belongs to the TrpA family. As to quaternary structure, tetramer of two alpha and two beta chains.

It carries out the reaction (1S,2R)-1-C-(indol-3-yl)glycerol 3-phosphate + L-serine = D-glyceraldehyde 3-phosphate + L-tryptophan + H2O. Its pathway is amino-acid biosynthesis; L-tryptophan biosynthesis; L-tryptophan from chorismate: step 5/5. In terms of biological role, the alpha subunit is responsible for the aldol cleavage of indoleglycerol phosphate to indole and glyceraldehyde 3-phosphate. The sequence is that of Tryptophan synthase alpha chain from Halorhodospira halophila (strain DSM 244 / SL1) (Ectothiorhodospira halophila (strain DSM 244 / SL1)).